The chain runs to 300 residues: Probable amino-acid ABC transporter periplasmic-binding protein y4tE (300 aa).

The first 27 residues, 1-27 (MTHLKISKTAPAVARFLPAGRIASVAA), serve as a signal peptide directing secretion.

It belongs to the bacterial solute-binding protein 3 family.

Its subcellular location is the periplasm. In terms of biological role, probably part of the binding-protein-dependent transport system y4tEFGH for an amino acid. In Sinorhizobium fredii (strain NBRC 101917 / NGR234), this protein is Probable amino-acid ABC transporter periplasmic-binding protein y4tE.